The primary structure comprises 629 residues: Serine/threonine-protein kinase ICK (629 aa).

One can recognise a Protein kinase domain in the interval 4 to 284 (YTTIKQLGDG…ASQALRYPYF (281 aa)). Residues 10-18 (LGDGTYGSV) and Lys-33 each bind ATP. Asp-125 functions as the Proton acceptor in the catalytic mechanism. The residue at position 157 (Thr-157) is a Phosphothreonine. Phosphotyrosine is present on Tyr-159. Residue Ser-161 is modified to Phosphoserine. Disordered stretches follow at residues 292–322 (ISTQ…PAQA), 454–482 (PSEP…QSTA), and 579–629 (GYSS…PSRR). The segment covering 309–321 (GPPPYVKPAPPAQ) has biased composition (pro residues). The span at 460–482 (TGTSVSTQASSQRRDTPTLQSTA) shows a compositional bias: polar residues.

This sequence belongs to the protein kinase superfamily. CMGC Ser/Thr protein kinase family. CDC2/CDKX subfamily. Mg(2+) is required as a cofactor. Post-translationally, autophosphorylated on serine and threonine residues. Phosphorylation at Thr-157 increases kinase activity. Expressed in embryonic heart from day 11. Highly expressed in the uterus and at lower levels in brain, heart, lung, kidney, skeletal muscle, ovary and liver in adult tissues.

Its subcellular location is the cytoplasm. It is found in the cell projection. It localises to the cilium. The protein localises to the nucleus. The protein resides in the cytoskeleton. Its subcellular location is the cilium basal body. It catalyses the reaction L-seryl-[protein] + ATP = O-phospho-L-seryl-[protein] + ADP + H(+). It carries out the reaction L-threonyl-[protein] + ATP = O-phospho-L-threonyl-[protein] + ADP + H(+). In terms of biological role, required for ciliogenesis, particularly in neuronal and retinal progenitor cells. Phosphorylates KIF3A. Involved in the control of ciliary length. Regulates the ciliary localization of SHH pathway components as well as the localization of IFT components at ciliary tips. May play a role in cardiac development. Regulates intraflagellar transport (IFT) speed and negatively regulates cilium length in a cAMP and mTORC1 signaling-dependent manner and this regulation requires its kinase activity. The polypeptide is Serine/threonine-protein kinase ICK (Cilk1) (Rattus norvegicus (Rat)).